We begin with the raw amino-acid sequence, 149 residues long: Hut operon positive regulatory protein (149 aa).

This sequence belongs to the HutP family. As to quaternary structure, homohexamer.

In terms of biological role, antiterminator that binds to cis-acting regulatory sequences on the mRNA in the presence of histidine, thereby suppressing transcription termination and activating the hut operon for histidine utilization. In Geobacillus sp. (strain WCH70), this protein is Hut operon positive regulatory protein.